The following is a 370-amino-acid chain: Phospho-N-acetylmuramoyl-pentapeptide-transferase (370 aa).

11 helical membrane passes run 21 to 41, 46 to 66, 92 to 112, 117 to 137, 151 to 171, 181 to 201, 217 to 237, 243 to 263, 270 to 290, 298 to 318, and 349 to 369; these read PTSI…DLFI, LLVP…WGII, PSMG…LFAL, FSKQ…IGLI, LSVK…LVLI, ILIF…IALF, DGLA…ELII, NYAI…FLIF, VFMG…VALL, LIMG…VGVF, and TIIV…AIML.

The protein belongs to the glycosyltransferase 4 family. MraY subfamily. Mg(2+) serves as cofactor.

The protein localises to the cell inner membrane. The catalysed reaction is UDP-N-acetyl-alpha-D-muramoyl-L-alanyl-gamma-D-glutamyl-meso-2,6-diaminopimeloyl-D-alanyl-D-alanine + di-trans,octa-cis-undecaprenyl phosphate = di-trans,octa-cis-undecaprenyl diphospho-N-acetyl-alpha-D-muramoyl-L-alanyl-D-glutamyl-meso-2,6-diaminopimeloyl-D-alanyl-D-alanine + UMP. It functions in the pathway cell wall biogenesis; peptidoglycan biosynthesis. Functionally, catalyzes the initial step of the lipid cycle reactions in the biosynthesis of the cell wall peptidoglycan: transfers peptidoglycan precursor phospho-MurNAc-pentapeptide from UDP-MurNAc-pentapeptide onto the lipid carrier undecaprenyl phosphate, yielding undecaprenyl-pyrophosphoryl-MurNAc-pentapeptide, known as lipid I. This chain is Phospho-N-acetylmuramoyl-pentapeptide-transferase, found in Prochlorococcus marinus (strain SARG / CCMP1375 / SS120).